A 265-amino-acid polypeptide reads, in one-letter code: Undecaprenyl-diphosphatase (265 aa).

The next 7 membrane-spanning stretches (helical) occupy residues arginine 38 to leucine 58, arginine 75 to valine 95, proline 108 to glycine 128, valine 135 to proline 155, phenylalanine 181 to methionine 201, valine 215 to serine 235, and valine 244 to alanine 264.

The protein belongs to the UppP family.

The protein localises to the cell inner membrane. It catalyses the reaction di-trans,octa-cis-undecaprenyl diphosphate + H2O = di-trans,octa-cis-undecaprenyl phosphate + phosphate + H(+). Its function is as follows. Catalyzes the dephosphorylation of undecaprenyl diphosphate (UPP). Confers resistance to bacitracin. The protein is Undecaprenyl-diphosphatase of Xanthomonas oryzae pv. oryzae (strain MAFF 311018).